We begin with the raw amino-acid sequence, 154 residues long: Small ribosomal subunit protein uS15 (154 aa).

A compositionally biased stretch (basic residues) spans 1–14; sequence MAPVPHRSRHKKGR. The interval 1–24 is disordered; the sequence is MAPVPHRSRHKKGRSGSVRPAHPT.

Belongs to the universal ribosomal protein uS15 family. In terms of assembly, part of the 30S ribosomal subunit.

The polypeptide is Small ribosomal subunit protein uS15 (Pyrobaculum arsenaticum (strain DSM 13514 / JCM 11321 / PZ6)).